A 296-amino-acid chain; its full sequence is Probable porphobilinogen deaminase (296 aa).

Cys241 carries the S-(dipyrrolylmethanemethyl)cysteine modification.

Belongs to the HMBS family. It depends on dipyrromethane as a cofactor.

It catalyses the reaction 4 porphobilinogen + H2O = hydroxymethylbilane + 4 NH4(+). The protein operates within porphyrin-containing compound metabolism; protoporphyrin-IX biosynthesis; coproporphyrinogen-III from 5-aminolevulinate: step 2/4. Tetrapolymerization of the monopyrrole PBG into the hydroxymethylbilane pre-uroporphyrinogen in several discrete steps. This is Probable porphobilinogen deaminase from Pyrobaculum calidifontis (strain DSM 21063 / JCM 11548 / VA1).